We begin with the raw amino-acid sequence, 570 residues long: Trans-cinnamate:CoA ligase, peroxisomal (570 aa).

Residues Ala-568–Leu-570 carry the Microbody targeting signal motif.

This sequence belongs to the ATP-dependent AMP-binding enzyme family. In terms of assembly, monomer. K(+) serves as cofactor. Mostly expressed in flower organs, with highest levels in corollas and petal limbs, and, to a lesser extent, in petal tubes, sepals, pistils, stamen, stigma, anthers and ovaries. Also present at low levels in leaves, stems and roots.

Its subcellular location is the peroxisome. The enzyme catalyses (E)-4-coumarate + ATP + CoA = (E)-4-coumaroyl-CoA + AMP + diphosphate. The catalysed reaction is (E)-caffeate + ATP + CoA = (E)-caffeoyl-CoA + AMP + diphosphate. It catalyses the reaction (E)-cinnamate + ATP + CoA = (E)-cinnamoyl-CoA + AMP + diphosphate. It participates in phenylpropanoid metabolism; trans-cinnamate biosynthesis. Its pathway is phytoalexin biosynthesis; 3,4',5-trihydroxystilbene biosynthesis; 3,4',5-trihydroxystilbene from trans-4-coumarate: step 1/2. Functionally, involved in the biosynthesis of floral volatile benzenoid/phenylpropanoid (FVBP) scent (e.g. benzylbenzoate, phenylethylbenzoate, and methylbenzoate). Catalyzes the formation of CoA esters of cinnamic acid, and, with lower efficiency, of 4-coumaric acid and caffeic acid. The protein is Trans-cinnamate:CoA ligase, peroxisomal of Petunia hybrida (Petunia).